The following is a 387-amino-acid chain: Patatin-01 (387 aa).

Positions 1 to 23 (MATTKSFLILSVMILATTSSTFA) are cleaved as a signal peptide. The region spanning 32-230 (LSIDGGGIKG…TVADPALLSV (199 aa)) is the PNPLA domain. The GXGXXG motif lies at 36–41 (GGGIKG). The GXSXG motif lies at 75–79 (GTSTG). The Nucleophile role is filled by S77. The N-linked (GlcNAc...) asparagine glycan is linked to N115. Residue D216 is the Proton acceptor of the active site. The DGA/G signature appears at 216–218 (DGA). A coiled-coil region spans residues 361–385 (ETYEEALKRFAKLLSDRKKLRANKA).

It belongs to the patatin family. Tuber.

It is found in the vacuole. Probable lipolytic acyl hydrolase (LAH), an activity which is thought to be involved in the response of tubers to pathogens. This chain is Patatin-01, found in Solanum tuberosum (Potato).